The chain runs to 103 residues: Small ribosomal subunit protein uS10 (103 aa).

Belongs to the universal ribosomal protein uS10 family. Part of the 30S ribosomal subunit.

Involved in the binding of tRNA to the ribosomes. The sequence is that of Small ribosomal subunit protein uS10 from Chlorobium limicola (strain DSM 245 / NBRC 103803 / 6330).